Here is a 1305-residue protein sequence, read N- to C-terminus: Myosin-IIIb (1305 aa).

Residues 15-281 form the Protein kinase domain; the sequence is WEIIETIGKG…VTHLLDHPFI (267 aa). Residues 21 to 29 and K44 each bind ATP; that span reads IGKGTYGKV. D144 serves as the catalytic Proton acceptor. The Myosin motor domain occupies 331–1046; it reads CLEDDLVNLE…HVEQLNLLLR (716 aa). An actin-binding region spans residues 927–949; the sequence is LMDLLSKMVVGQPHFIRCIKPND. 2 IQ domains span residues 1048–1077 and 1075–1104; these read VMGRVVMLQAYTKGWLGARRYKRAKEKREK and REKGAITIQSAWRGYDARRKLKQRSRRRSE. Disordered stretches follow at residues 1093–1164 and 1200–1233; these read RKLK…VTSG and SPCEDSLKPGSEEGLSQKQRAPRRRCQQPKMLSS.

In the C-terminal section; belongs to the TRAFAC class myosin-kinesin ATPase superfamily. Myosin family. This sequence in the N-terminal section; belongs to the protein kinase superfamily. STE Ser/Thr protein kinase family. Interacts (via C-terminus) with ESPN. Interacts (via C-terminus) with ESPNL. In terms of tissue distribution, expressed in the cochlear hair cells (at protein level). Expressed in utricle hair bundles (at protein level).

Its subcellular location is the cytoplasm. It is found in the cytoskeleton. The protein resides in the cell projection. It localises to the stereocilium. It carries out the reaction L-seryl-[protein] + ATP = O-phospho-L-seryl-[protein] + ADP + H(+). It catalyses the reaction L-threonyl-[protein] + ATP = O-phospho-L-threonyl-[protein] + ADP + H(+). Functionally, probable actin-based motor with a protein kinase activity. Required for normal cochlear hair bundle development and hearing. Plays an important role in the early steps of cochlear hair bundle morphogenesis. Influences the number and lengths of stereocilia to be produced and limits the growth of microvilli within the forming auditory hair bundles thereby contributing to the architecture of the hair bundle, including its staircase pattern. Involved in the elongation of actin in stereocilia tips by transporting the actin regulatory factor ESPN to the plus ends of actin filaments. In Mus musculus (Mouse), this protein is Myosin-IIIb (Myo3b).